The following is a 163-amino-acid chain: NADH-quinone oxidoreductase subunit I (163 aa).

4Fe-4S ferredoxin-type domains lie at 54–84 and 94–123; these read LRRY…IDSA and TRYD…ETHI. Residues Cys-64, Cys-67, Cys-70, Cys-74, Cys-103, Cys-106, Cys-109, and Cys-113 each contribute to the [4Fe-4S] cluster site.

This sequence belongs to the complex I 23 kDa subunit family. In terms of assembly, NDH-1 is composed of 14 different subunits. Subunits NuoA, H, J, K, L, M, N constitute the membrane sector of the complex. It depends on [4Fe-4S] cluster as a cofactor.

It is found in the cell inner membrane. The catalysed reaction is a quinone + NADH + 5 H(+)(in) = a quinol + NAD(+) + 4 H(+)(out). Its function is as follows. NDH-1 shuttles electrons from NADH, via FMN and iron-sulfur (Fe-S) centers, to quinones in the respiratory chain. The immediate electron acceptor for the enzyme in this species is believed to be ubiquinone. Couples the redox reaction to proton translocation (for every two electrons transferred, four hydrogen ions are translocated across the cytoplasmic membrane), and thus conserves the redox energy in a proton gradient. This is NADH-quinone oxidoreductase subunit I from Xanthomonas campestris pv. campestris (strain 8004).